Here is an 80-residue protein sequence, read N- to C-terminus: Translation initiation factor IF-1, chloroplastic (80 aa).

Positions 1–72 (MKKQNLIDME…TKGRIIYRLR (72 aa)) constitute an S1-like domain.

This sequence belongs to the IF-1 family. Component of the 30S ribosomal translation pre-initiation complex which assembles on the 30S ribosome in the order IF-2 and IF-3, IF-1 and N-formylmethionyl-tRNA(fMet); mRNA recruitment can occur at any time during PIC assembly.

It is found in the plastid. It localises to the chloroplast. One of the essential components for the initiation of protein synthesis. Stabilizes the binding of IF-2 and IF-3 on the 30S subunit to which N-formylmethionyl-tRNA(fMet) subsequently binds. Helps modulate mRNA selection, yielding the 30S pre-initiation complex (PIC). Upon addition of the 50S ribosomal subunit IF-1, IF-2 and IF-3 are released leaving the mature 70S translation initiation complex. This chain is Translation initiation factor IF-1, chloroplastic, found in Adiantum capillus-veneris (Maidenhair fern).